The chain runs to 359 residues: Ferredoxin--NADP reductase (359 aa).

Residues aspartate 48, glutamine 56, tyrosine 61, alanine 101, phenylalanine 139, aspartate 304, and serine 345 each contribute to the FAD site. A disordered region spans residues 340–359 (VHTHTSNDTNLQSRLHAAAE). Over residues 341–352 (HTHTSNDTNLQS) the composition is skewed to polar residues.

It belongs to the ferredoxin--NADP reductase type 2 family. Homodimer. The cofactor is FAD.

The enzyme catalyses 2 reduced [2Fe-2S]-[ferredoxin] + NADP(+) + H(+) = 2 oxidized [2Fe-2S]-[ferredoxin] + NADPH. This is Ferredoxin--NADP reductase from Ralstonia nicotianae (strain ATCC BAA-1114 / GMI1000) (Ralstonia solanacearum).